A 326-amino-acid polypeptide reads, in one-letter code: Pyruvate dehydrogenase E1 component subunit alpha (326 aa).

As to quaternary structure, heterodimer of an alpha and a beta chain. It depends on thiamine diphosphate as a cofactor.

It catalyses the reaction N(6)-[(R)-lipoyl]-L-lysyl-[protein] + pyruvate + H(+) = N(6)-[(R)-S(8)-acetyldihydrolipoyl]-L-lysyl-[protein] + CO2. Functionally, the pyruvate dehydrogenase complex catalyzes the overall conversion of pyruvate to acetyl-CoA and CO(2). It contains multiple copies of three enzymatic components: pyruvate dehydrogenase (E1), dihydrolipoamide acetyltransferase (E2) and lipoamide dehydrogenase (E3). The protein is Pyruvate dehydrogenase E1 component subunit alpha (pdhA) of Rickettsia conorii (strain ATCC VR-613 / Malish 7).